Reading from the N-terminus, the 225-residue chain is NAD(P)H-quinone oxidoreductase subunit K, chloroplastic (225 aa).

[4Fe-4S] cluster-binding residues include cysteine 43, cysteine 44, cysteine 108, and cysteine 139.

It belongs to the complex I 20 kDa subunit family. NDH is composed of at least 16 different subunits, 5 of which are encoded in the nucleus. [4Fe-4S] cluster serves as cofactor.

Its subcellular location is the plastid. The protein resides in the chloroplast thylakoid membrane. The enzyme catalyses a plastoquinone + NADH + (n+1) H(+)(in) = a plastoquinol + NAD(+) + n H(+)(out). It carries out the reaction a plastoquinone + NADPH + (n+1) H(+)(in) = a plastoquinol + NADP(+) + n H(+)(out). Its function is as follows. NDH shuttles electrons from NAD(P)H:plastoquinone, via FMN and iron-sulfur (Fe-S) centers, to quinones in the photosynthetic chain and possibly in a chloroplast respiratory chain. The immediate electron acceptor for the enzyme in this species is believed to be plastoquinone. Couples the redox reaction to proton translocation, and thus conserves the redox energy in a proton gradient. The chain is NAD(P)H-quinone oxidoreductase subunit K, chloroplastic from Dioscorea elephantipes (Elephant's foot yam).